The following is a 579-amino-acid chain: Aspartate--tRNA(Asp/Asn) ligase (579 aa).

Glu-169 is an L-aspartate binding site. An aspartate region spans residues 193-196 (QLFK). Arg-215 is an L-aspartate binding site. ATP is bound by residues 215–217 (RDE) and Gln-224. His-437 contacts L-aspartate. ATP is bound at residue Glu-471. Residue Arg-478 coordinates L-aspartate. Residue 523 to 526 (GWDR) coordinates ATP. The tract at residues 551-579 (DPLTGAPTPITAEQRREAGVDAVPEQATS) is disordered.

Belongs to the class-II aminoacyl-tRNA synthetase family. Type 1 subfamily. In terms of assembly, homodimer.

It localises to the cytoplasm. It carries out the reaction tRNA(Asx) + L-aspartate + ATP = L-aspartyl-tRNA(Asx) + AMP + diphosphate. Its function is as follows. Aspartyl-tRNA synthetase with relaxed tRNA specificity since it is able to aspartylate not only its cognate tRNA(Asp) but also tRNA(Asn). Reaction proceeds in two steps: L-aspartate is first activated by ATP to form Asp-AMP and then transferred to the acceptor end of tRNA(Asp/Asn). The chain is Aspartate--tRNA(Asp/Asn) ligase from Thermobifida fusca (strain YX).